Reading from the N-terminus, the 274-residue chain is tRNA pseudouridine synthase A (274 aa).

The active-site Nucleophile is the aspartate 60. Tyrosine 118 serves as a coordination point for substrate.

It belongs to the tRNA pseudouridine synthase TruA family. As to quaternary structure, homodimer.

The enzyme catalyses uridine(38/39/40) in tRNA = pseudouridine(38/39/40) in tRNA. Its function is as follows. Formation of pseudouridine at positions 38, 39 and 40 in the anticodon stem and loop of transfer RNAs. The polypeptide is tRNA pseudouridine synthase A (Picosynechococcus sp. (strain ATCC 27264 / PCC 7002 / PR-6) (Agmenellum quadruplicatum)).